The following is a 78-amino-acid chain: Large ribosomal subunit protein eL38 (78 aa).

This sequence belongs to the eukaryotic ribosomal protein eL38 family.

The protein is Large ribosomal subunit protein eL38 (RpL38) of Maconellicoccus hirsutus (Pink hibiscus mealybug).